Consider the following 674-residue polypeptide: Zinc finger protein 750 (674 aa).

A CCHC-type zinc finger spans residues 25-51 (YKCFQCPFTCNEKSHLFNHMKYGLCKN). Zn(2+) contacts are provided by Cys-27, Cys-30, His-43, and Cys-49. Disordered regions lie at residues 105–125 (EAKE…KTTV), 370–466 (LAKN…QSHS), and 594–674 (TSSP…PRVS). Composition is skewed to polar residues over residues 401–411 (SPTNFTQSSQG) and 444–466 (DSQT…QSHS).

It localises to the nucleus. Functionally, transcription factor involved in epidermis differentiation. This chain is Zinc finger protein 750 (znf750), found in Xenopus laevis (African clawed frog).